The following is an 810-amino-acid chain: MAPAAGPRTGKHAKPPRSKTLKRKRGQDELSSLIQRVEDLDLKETFKSFSDLPLSEPTASGLASSHYKTLTDIQSRAISHALKGRDVLGAAKTGSGKTLAFLVPVLENLYRKQWAEHDGLGALILSPTRELAIQIFEVLRKIGRYHTFSAGLVIGGKSLKEEQERLGRMNILVCTPGRMLQHLDQTALFDTYNLQMLVLDEADRILDLGFQQTVDAIIGHLPKERQTLLFSATQTKKVSDLARLSLQDPEYVAVHETASSATPSKLQQHYVITPLPQKLDILWSFIRSNLKSKTMVFLSSGKQVRFVYESFRHLQPGIPLMHLHGRQKQGGRLDIVTRFSQSKHCVLFSTDVAARGLDFPAVDWVIQLDCPEDADTYIHRVGRTARYEREGRAVLFLDPSEEEGMLKRLEQKKVPIEKINIKANKQQSIKDQLQNMCFKDPELKYLGQKAFISYVKSVYIQKDKEIFKLKELKLDEFAASLGLPGAPRIKFIKGDDTKQRKNAPRAAAHLLSDDDDSDEEDGEKKSKKKEEPQVRTKYDRMFERRNQDVLAEHYSKLINDDGTMVAPNAGAGADADEDDDFLSVKRRFDAGDKDLGSSSDEDDESEKGDKKDVKVVHIDGSTPLVIDSKRREKLLKSKKKLLKFKGKGTKLVYDDEGNPHELYELEDEEQFKARGDAKDQQAKFLAEEVERTRMADMEDKEIAKQKRREKKEKRKARERELLAEAEEEETLVQLPPYEGDQDVDGGFSASEDEAPRPSKKPKVKFTEANDREEAEPWYKKSKKPSDKAANAPPQVQTLEDLESLATGLLG.

The interval 1–28 is disordered; the sequence is MAPAAGPRTGKHAKPPRSKTLKRKRGQD. The span at 9–25 shows a compositional bias: basic residues; that stretch reads TGKHAKPPRSKTLKRKR. The short motif at 47-75 is the Q motif element; sequence KSFSDLPLSEPTASGLASSHYKTLTDIQS. A Helicase ATP-binding domain is found at 78–252; that stretch reads ISHALKGRDV…RLSLQDPEYV (175 aa). 91 to 98 lines the ATP pocket; it reads AKTGSGKT. Positions 200–203 match the DEAD box motif; sequence DEAD. The Helicase C-terminal domain occupies 278–437; the sequence is KLDILWSFIR…SIKDQLQNMC (160 aa). 3 disordered regions span residues 494 to 542, 590 to 615, and 690 to 810; these read GDDT…DRMF, AGDK…DVKV, and ERTR…GLLG. Basic and acidic residues predominate over residues 522-542; that stretch reads GEKKSKKKEEPQVRTKYDRMF. Residues 690-704 show a composition bias toward basic and acidic residues; sequence ERTRMADMEDKEIAK. The span at 705 to 714 shows a compositional bias: basic residues; the sequence is QKRREKKEKR. A compositionally biased stretch (basic and acidic residues) spans 764–786; it reads KFTEANDREEAEPWYKKSKKPSD.

Belongs to the DEAD box helicase family. DDX10/DBP4 subfamily. In terms of assembly, interacts with the U3 and U14 snoRNAs. Associates with pre-ribosomal complexes.

Its subcellular location is the nucleus. The protein resides in the nucleolus. It catalyses the reaction ATP + H2O = ADP + phosphate + H(+). In terms of biological role, ATP-dependent RNA helicase required for ribosome biogenesis. Involved in the release of U14 snoRNA in pre-ribosomal complexes. Required for pre-rRNA cleavage at site A2. The protein is ATP-dependent RNA helicase dbp4 (dbp4) of Neosartorya fischeri (strain ATCC 1020 / DSM 3700 / CBS 544.65 / FGSC A1164 / JCM 1740 / NRRL 181 / WB 181) (Aspergillus fischerianus).